The sequence spans 320 residues: Cytochrome f (320 aa).

The first 35 residues, 1-35, serve as a signal peptide directing secretion; it reads MNFFTHKKNNFGSFVTIFSFLVALGVTNLTPAAEA. Heme is bound by residues Tyr-36, Cys-56, Cys-59, and His-60. Residues 286-306 traverse the membrane as a helical segment; the sequence is IQGLLVFFATVLFAQVLLVLK.

This sequence belongs to the cytochrome f family. The 4 large subunits of the cytochrome b6-f complex are cytochrome b6, subunit IV (17 kDa polypeptide, petD), cytochrome f and the Rieske protein, while the 4 small subunits are PetG, PetL, PetM and PetN. The complex functions as a dimer. The cofactor is heme.

It localises to the plastid. The protein localises to the chloroplast thylakoid membrane. Its function is as follows. Component of the cytochrome b6-f complex, which mediates electron transfer between photosystem II (PSII) and photosystem I (PSI), cyclic electron flow around PSI, and state transitions. This chain is Cytochrome f, found in Tetradesmus obliquus (Green alga).